The sequence spans 313 residues: Maintenance of mitochondrial morphology protein 1 (313 aa).

Residues 1–12 are Lumenal-facing; sequence MIHLPQGSFTQG. Residues 13-33 form a helical membrane-spanning segment; the sequence is LIVGQLLTLAIIYVFLRFFLF. Topologically, residues 34 to 313 are cytoplasmic; it reads CSPIPKSVAN…APQEESSNED (280 aa). Over residues 42–63 the composition is skewed to polar residues; the sequence is ANSPKQTGNETPDETPSTPLSN. Residues 42–65 form a disordered region; the sequence is ANSPKQTGNETPDETPSTPLSNNK. The SMP-LTD domain occupies 90-288; it reads EPESLDWFNV…SPQFQQIAIP (199 aa).

It belongs to the MMM1 family. Homodimer. Component of the ER-mitochondria encounter structure (ERMES) or MDM complex, composed of mmm1, mdm10, mdm12 and mdm34. A mmm1 homodimer associates with one molecule of mdm12 on each side in a pairwise head-to-tail manner, and the SMP-LTD domains of mmm1 and mdm12 generate a continuous hydrophobic tunnel for phospholipid trafficking.

It is found in the endoplasmic reticulum membrane. Component of the ERMES/MDM complex, which serves as a molecular tether to connect the endoplasmic reticulum (ER) and mitochondria. Components of this complex are involved in the control of mitochondrial shape and protein biogenesis, and function in nonvesicular lipid trafficking between the ER and mitochondria. The mdm12-mmm1 subcomplex functions in the major beta-barrel assembly pathway that is responsible for biogenesis of all outer membrane beta-barrel proteins, and acts in a late step after the SAM complex. The mdm10-mdm12-mmm1 subcomplex further acts in the TOM40-specific pathway after the action of the mdm12-mmm1 complex. Essential for establishing and maintaining the structure of mitochondria and maintenance of mtDNA nucleoids. The chain is Maintenance of mitochondrial morphology protein 1 from Schizosaccharomyces pombe (strain 972 / ATCC 24843) (Fission yeast).